The primary structure comprises 650 residues: Probable acyl-CoA dehydrogenase FadE10 (650 aa).

The interval 1 to 23 (MAQQTQVTEEQARALAEESRESG) is disordered. The span at 10-23 (EQARALAEESRESG) shows a compositional bias: basic and acidic residues. Glutamate 422 serves as the catalytic Proton acceptor.

Belongs to the acyl-CoA dehydrogenase family. Requires FAD as cofactor.

The enzyme catalyses a 2,3-saturated acyl-CoA + A = a 2,3-dehydroacyl-CoA + AH2. In Mycobacterium tuberculosis (strain CDC 1551 / Oshkosh), this protein is Probable acyl-CoA dehydrogenase FadE10 (fadE10).